A 445-amino-acid chain; its full sequence is GTPase Der (445 aa).

2 consecutive EngA-type G domains span residues proline 3–valine 166 and isoleucine 180–tyrosine 353. GTP contacts are provided by residues glycine 9–serine 16, aspartate 56–isoleucine 60, asparagine 118–aspartate 121, glycine 186–serine 193, aspartate 233–isoleucine 237, and asparagine 298–aspartate 301. In terms of domain architecture, KH-like spans alanine 354–glutamate 438.

It belongs to the TRAFAC class TrmE-Era-EngA-EngB-Septin-like GTPase superfamily. EngA (Der) GTPase family. In terms of assembly, associates with the 50S ribosomal subunit.

Its function is as follows. GTPase that plays an essential role in the late steps of ribosome biogenesis. The chain is GTPase Der from Marinomonas sp. (strain MWYL1).